Consider the following 210-residue polypeptide: Glutathione S-transferase P 1 (210 aa).

The GST N-terminal domain maps to 1–80; that stretch reads PEYTIIYFNA…LLARNHDLYG (80 aa). Residues Tyr7, Arg13, Trp38, Lys44, 51 to 52, and 64 to 65 contribute to the glutathione site; these read QL and QS. Positions 82–203 constitute a GST C-terminal domain; sequence NPREASLIDM…SSDAHKKRPI (122 aa).

This sequence belongs to the GST superfamily. Pi family. As to quaternary structure, homodimer.

The protein resides in the cytoplasm. It is found in the mitochondrion. The protein localises to the nucleus. The catalysed reaction is RX + glutathione = an S-substituted glutathione + a halide anion + H(+). Functionally, conjugation of reduced glutathione to a wide number of exogenous and endogenous hydrophobic electrophiles. This Bufo bufo (European toad) protein is Glutathione S-transferase P 1.